The primary structure comprises 981 residues: Polyhomeotic-like protein 3 (981 aa).

Over residues 1–28 (MDSEPSSGTSVSTTASSTTTTTITTSSS) the composition is skewed to low complexity. Disordered stretches follow at residues 1–33 (MDSE…MQQP), 102–127 (LSSG…TSIL), 224–280 (LSSS…TAVT), and 307–407 (QIPL…SQSP). Positions 224–255 (LSSSQNGSPKSAGQTQSLTICHNKTTVTSSKI) are enriched in polar residues. Ser-231, Ser-261, Ser-269, and Ser-312 each carry phosphoserine. Over residues 256–266 (SQRDPSPESKK) the composition is skewed to basic and acidic residues. The span at 321–340 (QLLLQQQQQQIQPITLQSPS) shows a compositional bias: low complexity. Residues 360–373 (APSNAQPQHCSPVQ) are compositionally biased toward polar residues. The span at 381-395 (VSPNQAQSAQQSVVV) shows a compositional bias: low complexity. Thr-607 and Thr-612 each carry phosphothreonine. Ser-614 is modified (phosphoserine). The disordered stretch occupies residues 650-690 (KSPSDPTHASAPAPPLLIPAASTRSSSTSLASSTPSLENKP). The segment covering 667–686 (IPAASTRSSSTSLASSTPSL) has biased composition (low complexity). Residues Lys-689 and Lys-730 each participate in a glycyl lysine isopeptide (Lys-Gly) (interchain with G-Cter in SUMO2) cross-link. An HD1 motif is present at residues 689-718 (KPPQAIVKPQILTHVIEGFVIQEGLEPFPV). Phosphoserine occurs at positions 759 and 760. An FCS-type zinc finger spans residues 774 to 808 (EEMDSELLKCEFCGKMGYPNEFLRSKRFCTMSCAK). Residues Cys-783, Cys-786, Cys-802, and Cys-806 each contribute to the Zn(2+) site. Lys-808 is covalently cross-linked (Glycyl lysine isopeptide (Lys-Gly) (interchain with G-Cter in SUMO2)). Disordered regions lie at residues 825 to 844 (RKPD…GPEG) and 863 to 888 (EDVA…ERER). Residues 917–981 (WTVDDVWAFI…CARINSLKDS (65 aa)) enclose the SAM domain.

Component of a PRC1-like complex. As to expression, ubiquitous expression.

Its subcellular location is the nucleus. Its function is as follows. Component of a Polycomb group (PcG) multiprotein PRC1-like complex, a complex class required to maintain the transcriptionally repressive state of many genes, including Hox genes, throughout development. PcG PRC1 complex acts via chromatin remodeling and modification of histones; it mediates monoubiquitination of histone H2A 'Lys-119', rendering chromatin heritably changed in its expressibility. In Mus musculus (Mouse), this protein is Polyhomeotic-like protein 3 (Phc3).